The chain runs to 324 residues: NAD(P)H-dependent D-xylose reductase XYR1 (324 aa).

Tyr-50 serves as the catalytic Proton donor. His-112 provides a ligand contact to substrate. Residues 168-169 (SN), 217-226 (SSFGPASFKE), and 273-283 (KSSREKTMKSN) each bind NAD(+).

Belongs to the aldo/keto reductase family.

The catalysed reaction is xylitol + NAD(+) = D-xylose + NADH + H(+). The enzyme catalyses xylitol + NADP(+) = D-xylose + NADPH + H(+). The protein operates within carbohydrate metabolism; D-xylose degradation. Functionally, catalyzes the initial reaction in the xylose utilization pathway by reducing D-xylose into xylitol. Xylose is a major component of hemicelluloses such as xylan. Most fungi utilize D-xylose via three enzymatic reactions, xylose reductase (XR), xylitol dehydrogenase (XDH), and xylulokinase, to form xylulose 5-phosphate, which enters pentose phosphate pathway. The polypeptide is NAD(P)H-dependent D-xylose reductase XYR1 (XYR1) (Pyricularia oryzae (strain 70-15 / ATCC MYA-4617 / FGSC 8958) (Rice blast fungus)).